The primary structure comprises 318 residues: MKILLANPRGFCAGVSRAVETVEKVLEVEKSPVYVRHEVVHNKVVVDSLKKKGVVFVKEVDEVPDDAVCIFSAHGVSLKVEEAAAKKNLVLYDATCPLVTKVHRGVRLASNNDAECILIGHKGHPEVQGTMGQYRSKKGAIYLIESEEDLNKLTIKDPDNLYYATQTTLSVDETHGIIQALKDKYPNIKGPKKEDICYATQNRQTAIKAMLKHIDVLVVVGSQNSSNSNRLKELATLEGIDAYLVDNPKDVDKLWFDNKKVCGVSAGASAPEYLVQQIISQISKVCSTEVEEFEGIKEEVYFPLPRLLKQKIGTGKVE.

Cysteine 12 contacts [4Fe-4S] cluster. (2E)-4-hydroxy-3-methylbut-2-enyl diphosphate-binding residues include histidine 41 and histidine 74. Dimethylallyl diphosphate is bound by residues histidine 41 and histidine 74. Positions 41 and 74 each coordinate isopentenyl diphosphate. Cysteine 96 serves as a coordination point for [4Fe-4S] cluster. (2E)-4-hydroxy-3-methylbut-2-enyl diphosphate is bound at residue histidine 124. Residue histidine 124 coordinates dimethylallyl diphosphate. An isopentenyl diphosphate-binding site is contributed by histidine 124. The Proton donor role is filled by glutamate 126. Threonine 167 serves as a coordination point for (2E)-4-hydroxy-3-methylbut-2-enyl diphosphate. Residue cysteine 197 coordinates [4Fe-4S] cluster. Residues serine 225, serine 226, asparagine 227, and serine 269 each contribute to the (2E)-4-hydroxy-3-methylbut-2-enyl diphosphate site. Residues serine 225, serine 226, asparagine 227, and serine 269 each coordinate dimethylallyl diphosphate. Residues serine 225, serine 226, asparagine 227, and serine 269 each contribute to the isopentenyl diphosphate site.

This sequence belongs to the IspH family. [4Fe-4S] cluster serves as cofactor.

It carries out the reaction isopentenyl diphosphate + 2 oxidized [2Fe-2S]-[ferredoxin] + H2O = (2E)-4-hydroxy-3-methylbut-2-enyl diphosphate + 2 reduced [2Fe-2S]-[ferredoxin] + 2 H(+). It catalyses the reaction dimethylallyl diphosphate + 2 oxidized [2Fe-2S]-[ferredoxin] + H2O = (2E)-4-hydroxy-3-methylbut-2-enyl diphosphate + 2 reduced [2Fe-2S]-[ferredoxin] + 2 H(+). It participates in isoprenoid biosynthesis; dimethylallyl diphosphate biosynthesis; dimethylallyl diphosphate from (2E)-4-hydroxy-3-methylbutenyl diphosphate: step 1/1. Its pathway is isoprenoid biosynthesis; isopentenyl diphosphate biosynthesis via DXP pathway; isopentenyl diphosphate from 1-deoxy-D-xylulose 5-phosphate: step 6/6. In terms of biological role, catalyzes the conversion of 1-hydroxy-2-methyl-2-(E)-butenyl 4-diphosphate (HMBPP) into a mixture of isopentenyl diphosphate (IPP) and dimethylallyl diphosphate (DMAPP). Acts in the terminal step of the DOXP/MEP pathway for isoprenoid precursor biosynthesis. In Francisella tularensis subsp. holarctica (strain LVS), this protein is 4-hydroxy-3-methylbut-2-enyl diphosphate reductase.